The primary structure comprises 409 residues: Failed axon connections homolog (409 aa).

Residues tyrosine 68 to isoleucine 88 form a helical membrane-spanning segment. Positions aspartate 372–lysine 409 are disordered.

Belongs to the FAX family.

The protein localises to the membrane. Functionally, may play a role in axonal development. The polypeptide is Failed axon connections homolog (FAXC) (Homo sapiens (Human)).